The sequence spans 102 residues: Large ribosomal subunit protein bL21 (102 aa).

This sequence belongs to the bacterial ribosomal protein bL21 family. In terms of assembly, part of the 50S ribosomal subunit. Contacts protein L20.

Its function is as follows. This protein binds to 23S rRNA in the presence of protein L20. This chain is Large ribosomal subunit protein bL21, found in Exiguobacterium sibiricum (strain DSM 17290 / CCUG 55495 / CIP 109462 / JCM 13490 / 255-15).